Consider the following 445-residue polypeptide: Adenylosuccinate synthetase (445 aa).

GTP is bound by residues 24–30 (GDEGKGK) and 52–54 (GHT). The active-site Proton acceptor is the D25. The Mg(2+) site is built by D25 and G52. Residues 25-28 (DEGK), 50-53 (NAGH), T147, R161, N238, T253, and R317 contribute to the IMP site. H53 (proton donor) is an active-site residue. Substrate is bound at residue 313–319 (TTTGRRR). GTP contacts are provided by residues R319, 345–347 (KLD), and 427–429 (GVG).

This sequence belongs to the adenylosuccinate synthetase family. In terms of assembly, homodimer. Requires Mg(2+) as cofactor.

It is found in the cytoplasm. The catalysed reaction is IMP + L-aspartate + GTP = N(6)-(1,2-dicarboxyethyl)-AMP + GDP + phosphate + 2 H(+). It functions in the pathway purine metabolism; AMP biosynthesis via de novo pathway; AMP from IMP: step 1/2. Functionally, plays an important role in the de novo pathway and in the salvage pathway of purine nucleotide biosynthesis. Catalyzes the first committed step in the biosynthesis of AMP from IMP. This Malassezia globosa (strain ATCC MYA-4612 / CBS 7966) (Dandruff-associated fungus) protein is Adenylosuccinate synthetase.